The sequence spans 430 residues: Adenylosuccinate synthetase (430 aa).

Residues 12-18 and 40-42 each bind GTP; these read GDEGKGK and GHT. Asp-13 (proton acceptor) is an active-site residue. The Mg(2+) site is built by Asp-13 and Gly-40. IMP-binding positions include 13-16, 38-41, Thr-128, Arg-142, Gln-223, Thr-238, and Arg-302; these read DEGK and NAGH. Residue His-41 is the Proton donor of the active site. 298–304 is a binding site for substrate; the sequence is VNTGRKR. GTP is bound by residues Arg-304, 330–332, and 412–414; these read KLD and GVG.

This sequence belongs to the adenylosuccinate synthetase family. In terms of assembly, homodimer. Mg(2+) serves as cofactor.

The protein localises to the cytoplasm. The catalysed reaction is IMP + L-aspartate + GTP = N(6)-(1,2-dicarboxyethyl)-AMP + GDP + phosphate + 2 H(+). Its pathway is purine metabolism; AMP biosynthesis via de novo pathway; AMP from IMP: step 1/2. Plays an important role in the de novo pathway of purine nucleotide biosynthesis. Catalyzes the first committed step in the biosynthesis of AMP from IMP. The polypeptide is Adenylosuccinate synthetase (Corynebacterium glutamicum (strain ATCC 13032 / DSM 20300 / JCM 1318 / BCRC 11384 / CCUG 27702 / LMG 3730 / NBRC 12168 / NCIMB 10025 / NRRL B-2784 / 534)).